A 174-amino-acid chain; its full sequence is RNA pyrophosphohydrolase (174 aa).

The Nudix hydrolase domain occupies 6 to 149; the sequence is GYRPNVGIIL…KRDVYLGALK (144 aa). Residues 38–59 carry the Nudix box motif; that stretch reads GGIKPGESPETAMYRELYEEVG.

Belongs to the Nudix hydrolase family. RppH subfamily. It depends on a divalent metal cation as a cofactor.

Functionally, accelerates the degradation of transcripts by removing pyrophosphate from the 5'-end of triphosphorylated RNA, leading to a more labile monophosphorylated state that can stimulate subsequent ribonuclease cleavage. This chain is RNA pyrophosphohydrolase, found in Neisseria meningitidis serogroup B (strain ATCC BAA-335 / MC58).